A 227-amino-acid polypeptide reads, in one-letter code: Claudin-15 (227 aa).

A topological domain (cytoplasmic) is located at residue M1. Residues 2-24 (SIAVETFGFFMSALGLLMLGVTL) form a helical membrane-spanning segment. Topologically, residues 25–74 (PNSYWRVSTVHGNVITTNTIFENLWYSCATDSLGVSNCWDFPSMLALSGY) are extracellular. Residues C52 and C62 are joined by a disulfide bond. The helical transmembrane segment at 75–99 (VQGCRALMITAILLGFLGLFLGMVG) threads the bilayer. The Cytoplasmic portion of the chain corresponds to 100–115 (LRCTNVGNIDLSRKAK). Position 111 is a phosphoserine (S111). A helical membrane pass occupies residues 116–140 (LLAIAGAFHILAGACGMVAISWYAV). At 141–159 (NITTDFFNPLYVGTKYELG) the chain is on the extracellular side. An important for the formation of tight-junction strand-like structures region spans residues 146 to 147 (FF). The chain crosses the membrane as a helical span at residues 160 to 182 (SALYLGWSASLLSILGGICVFST). The Cytoplasmic portion of the chain corresponds to 183–227 (CCCDSKEDPATRVGLPYKPSTVVTARATSDESDVSFGKYGKNAYV). Phosphoserine is present on residues S211, S214, and S217.

Belongs to the claudin family. In terms of assembly, can form homo- and heteropolymeric tight junction strands. Post-translationally, palmitoylated. As to expression, detected in kidney, jejunum and colon (at protein level).

The protein localises to the cell junction. It localises to the tight junction. Its subcellular location is the cell membrane. The enzyme catalyses Na(+)(in) = Na(+)(out). It carries out the reaction K(+)(in) = K(+)(out). It catalyses the reaction Cs(+)(in) = Cs(+)(out). The catalysed reaction is Rb(+)(in) = Rb(+)(out). The enzyme catalyses Li(+)(in) = Li(+)(out). It carries out the reaction NH4(+)(in) = NH4(+)(out). It catalyses the reaction methylamine(out) = methylamine(in). The catalysed reaction is H2O(in) = H2O(out). In terms of biological role, forms paracellular channels: polymerizes in tight junction strands with cation- and water-selective channels through the strands, conveying epithelial permeability in a process known as paracellular tight junction permeability. In intestinal epithelium, allows for sodium and water fluxes from the peritoneal side to the lumen of the intestine to regulate nutrient absorption and intestinal morphogenesis. The polypeptide is Claudin-15 (Rattus norvegicus (Rat)).